The primary structure comprises 128 residues: Large ribosomal subunit protein bL19 (128 aa).

It belongs to the bacterial ribosomal protein bL19 family.

Functionally, this protein is located at the 30S-50S ribosomal subunit interface and may play a role in the structure and function of the aminoacyl-tRNA binding site. In Caldicellulosiruptor bescii (strain ATCC BAA-1888 / DSM 6725 / KCTC 15123 / Z-1320) (Anaerocellum thermophilum), this protein is Large ribosomal subunit protein bL19.